The primary structure comprises 370 residues: ATP synthase gamma chain, chloroplastic (370 aa).

The transit peptide at 1–55 (MKFFCVAGLLASAAAFQAQPAAFTTYSPAVGGATSNVFSESSSPAHRNRRATIVM) directs the protein to the chloroplast. C145 is a catalytic residue.

It belongs to the ATPase gamma chain family. F-type ATPases have 2 components, CF(1) - the catalytic core - and CF(0) - the membrane proton channel. CF(1) has five subunits: alpha(3), beta(3), gamma(1), delta(1), epsilon(1). CF(0) has four main subunits: a, b, b' and c.

The protein localises to the plastid. Its subcellular location is the chloroplast thylakoid membrane. In terms of biological role, produces ATP from ADP in the presence of a proton gradient across the membrane. The gamma chain is believed to be important in regulating ATPase activity and the flow of protons through the CF(0) complex. This Trieres chinensis (Marine centric diatom) protein is ATP synthase gamma chain, chloroplastic (ATPC).